A 301-amino-acid polypeptide reads, in one-letter code: Hydroxymycolate synthase MmaA4 (301 aa).

S-adenosyl-L-methionine contacts are provided by residues 42 to 43 (YS), 81 to 83 (GCG), 103 to 108 (TLSKNQ), 132 to 133 (WE), and isoleucine 145. Cysteine 278 is a catalytic residue.

It belongs to the CFA/CMAS family. As to quaternary structure, monomer.

It participates in lipid metabolism; mycolic acid biosynthesis. Involved in the biosynthesis of hydroxymycolate, a common precursor of oxygenated mycolic acids (methoxymycolate and ketomycolate). Probably transfers a methyl group from the S-adenosylmethionine (SAM) cofactor and, subsequently or simultaneously, a water molecule onto the double bound of ethylene substrates, leading to the formation of the hydroxylated product at the distal position. The protein is Hydroxymycolate synthase MmaA4 (cmaA) of Mycobacterium bovis (strain ATCC BAA-935 / AF2122/97).